Consider the following 358-residue polypeptide: Alanine racemase (358 aa).

Residue K35 is the Proton acceptor; specific for D-alanine of the active site. K35 carries the post-translational modification N6-(pyridoxal phosphate)lysine. R130 is a binding site for substrate. The active-site Proton acceptor; specific for L-alanine is the Y255. Substrate is bound at residue M303.

The protein belongs to the alanine racemase family. Pyridoxal 5'-phosphate serves as cofactor.

The catalysed reaction is L-alanine = D-alanine. It functions in the pathway amino-acid biosynthesis; D-alanine biosynthesis; D-alanine from L-alanine: step 1/1. Functionally, catalyzes the interconversion of L-alanine and D-alanine. May also act on other amino acids. The protein is Alanine racemase (alr) of Shewanella sp. (strain W3-18-1).